Reading from the N-terminus, the 504-residue chain is MEEFQVYLELNRSRRHDFLYPLIFREYIYALAHEHGLNKSMIFFENQGYGNKFSSLIVKRLILRMDQQNRLISSANDSNQNPVFGHNNNLYSQMIAVGFAVIVEIPFSLRLISYSQGAEVAKSHNLQSIHSIFPFLEDKFSHLNYVLEALIPHPIHLEILVQALRYWVKDASSLHLLRFSLYEYCNLKSFITPKKSISIFNPRLFLFLYNSHTCEYESIFLFLRNQSSHLRSTSSGVFLERIFFYGKIKYLGEVFYNDFQNNLWLFKDPFIHFIRYQGKSILSSKDTSLLINKWKYYFVDLWQYYFYLWSQSGRVRINQLSKYSLDFLGYLSSVRLNPSVVRSQVLENSFLIDNAVKTLDTRIPIISLIGSLSKAKFCNTLGHPISKPTWADSPDSDIIDRFVRISRNLSHYHSGSSKKKSLYRIKYILRFSCVKTLARKHKSTVRAFLKKLGSEFLEEFFTETEEEHVISLIFPRGFFAMRKVYRGRIWYLDIICINALVNHS.

It belongs to the intron maturase 2 family. MatK subfamily.

The protein localises to the plastid. Its subcellular location is the chloroplast. In terms of biological role, usually encoded in the trnK tRNA gene intron. Probably assists in splicing its own and other chloroplast group II introns. The chain is Maturase K from Gossypium barbadense (Sea Island cotton).